A 144-amino-acid chain; its full sequence is Putative pre-16S rRNA nuclease (144 aa).

It belongs to the YqgF nuclease family.

The protein localises to the cytoplasm. Its function is as follows. Could be a nuclease involved in processing of the 5'-end of pre-16S rRNA. The sequence is that of Putative pre-16S rRNA nuclease from Symbiobacterium thermophilum (strain DSM 24528 / JCM 14929 / IAM 14863 / T).